Reading from the N-terminus, the 584-residue chain is Leucine-rich repeat and fibronectin type III domain-containing protein 1 (584 aa).

The N-terminal stretch at 1–17 (MERLVFCVLVFGALAKA) is a signal peptide. The LRRNT domain maps to 18 to 51 (QLCPGRCICQTISPTLTLLCAKTGLLFVPPTVDR). Residues 18-494 (QLCPGRCICQ…VPSQFLGGTM (477 aa)) are Extracellular-facing. LRR repeat units follow at residues 52–73 (KTVELRLTDNFITAVRRKDFLN), 76–97 (SLVHLTLSRNTISQIAPHAFMG), 100–121 (SLRALHMDGNRLSVINSDQLKG), 124–145 (NLRHLILGNNQIHHIEESSFDE), 149–170 (TIEDLDLSYNNLRTLPWEAIAR), 173–194 (NINTLTLDHNLIDHIGVGTFTL), and 197–218 (KLVRLDMTSNRLQTLPPDTLFQ). N-linked (GlcNAc...) asparagine glycosylation occurs at asparagine 73. The region spanning 241–287 (NPLHCNCELLWLRRLTREDDLETCASPEHLMDKYFWSIQEEEFICEP) is the LRRCT domain. The 88-residue stretch at 288-375 (PLITKHQVTK…GIATAAVHVH (88 aa)) folds into the Ig-like domain. The cysteines at positions 310 and 359 are disulfide-linked. Residues asparagine 332, asparagine 341, asparagine 384, asparagine 408, and asparagine 421 are each glycosylated (N-linked (GlcNAc...) asparagine). Residues 393-414 (DPGLSDISTSSRSSSNDSKTHS) form a disordered region. Positions 397–409 (SDISTSSRSSSND) are enriched in low complexity. A helical membrane pass occupies residues 495–515 (IIIIGGIIVASVLVFIIILMI). The Cytoplasmic segment spans residues 516–584 (RYKAYSGGGG…MVLPILHLLF (69 aa)). The disordered stretch occupies residues 539 to 564 (HVHSQTNGSRSAATKQSEEPPESPAG). Residues 540–553 (VHSQTNGSRSAATK) show a composition bias toward polar residues.

The protein belongs to the LRFN family.

Its subcellular location is the membrane. The protein localises to the synapse. Its function is as follows. Involved in the regulation of excitatory synapses. The chain is Leucine-rich repeat and fibronectin type III domain-containing protein 1 (lrfn1) from Danio rerio (Zebrafish).